A 749-amino-acid polypeptide reads, in one-letter code: Protein SEY1 homolog 2 (749 aa).

The Cytoplasmic portion of the chain corresponds to 1–671 (MIKNYGDRYH…QKHKQDFLQN (671 aa)). The GB1/RHD3-type G domain occupies 40-265 (GKNYNIVSII…YEKNVRWSDM (226 aa)). 50–57 (GSQSTGKS) provides a ligand contact to GTP. A coiled-coil region spans residues 445–465 (NQLKAFVEAQLATFKQQLDNI). A helical transmembrane segment spans residues 672-692 (IPKPFWFLLLFFMYDDVLRWM). The Lumenal portion of the chain corresponds to 693 to 695 (GNP). The chain crosses the membrane as a helical span at residues 696 to 716 (LFLYPILIILCFVGFCIAIGL). Residues 717 to 749 (HSLPKLAFQWVFRTLNQAVIPIIFGGISKLKGS) lie on the Cytoplasmic side of the membrane.

It belongs to the TRAFAC class dynamin-like GTPase superfamily. GB1/RHD3 GTPase family. RHD3 subfamily.

It is found in the endoplasmic reticulum membrane. In terms of biological role, probable GTP-binding protein that may be involved in cell development. In Paramecium tetraurelia, this protein is Protein SEY1 homolog 2.